Reading from the N-terminus, the 344-residue chain is AA9 family lytic polysaccharide monooxygenase D (344 aa).

An N-terminal signal peptide occupies residues 1 to 23 (MKTATSYAAFLLSALAALPHASA). H24 contacts Cu(2+). Cysteines 70 and 193 form a disulfide. Position 179 (H179) interacts with O2. Cu(2+) is bound at residue Y190. N-linked (GlcNAc...) asparagine glycans are attached at residues N201 and N207. The disordered stretch occupies residues 240–321 (PPLSNLVSGD…PTTSGNLSAN (82 aa)). Over residues 259 to 292 (STSSATLSGGAAPTGTASGSTPAGTSQPSSTTGT) the composition is skewed to low complexity. The segment covering 311–320 (APTTSGNLSA) has biased composition (polar residues). A glycan (N-linked (GlcNAc...) asparagine) is linked at N317.

The protein belongs to the polysaccharide monooxygenase AA9 family. Cu(2+) serves as cofactor.

The protein localises to the secreted. The catalysed reaction is [(1-&gt;4)-beta-D-glucosyl]n+m + reduced acceptor + O2 = 4-dehydro-beta-D-glucosyl-[(1-&gt;4)-beta-D-glucosyl]n-1 + [(1-&gt;4)-beta-D-glucosyl]m + acceptor + H2O.. In terms of biological role, lytic polysaccharide monooxygenase (LPMO) that depolymerizes crystalline and amorphous polysaccharides via the oxidation of scissile alpha- or beta-(1-4)-glycosidic bonds, yielding C1 or C4 oxidation products. Catalysis by LPMOs requires the reduction of the active-site copper from Cu(II) to Cu(I) by a reducing agent and H(2)O(2) or O(2) as a cosubstrate. In Gloeophyllum trabeum (strain ATCC 11539 / FP-39264 / Madison 617) (Brown rot fungus), this protein is AA9 family lytic polysaccharide monooxygenase D.